The primary structure comprises 293 residues: Ribosomal protein L11 methyltransferase (293 aa).

S-adenosyl-L-methionine is bound by residues Thr145, Gly166, Asp188, and Asn230.

This sequence belongs to the methyltransferase superfamily. PrmA family.

The protein localises to the cytoplasm. The enzyme catalyses L-lysyl-[protein] + 3 S-adenosyl-L-methionine = N(6),N(6),N(6)-trimethyl-L-lysyl-[protein] + 3 S-adenosyl-L-homocysteine + 3 H(+). Its function is as follows. Methylates ribosomal protein L11. This Actinobacillus succinogenes (strain ATCC 55618 / DSM 22257 / CCUG 43843 / 130Z) protein is Ribosomal protein L11 methyltransferase.